Consider the following 653-residue polypeptide: Mediator of RNA polymerase II transcription subunit 17 (653 aa).

A disordered region spans residues 246–271; it reads SNESDEHIDSTTGHDIPGTSEKLSAS.

The protein belongs to the Mediator complex subunit 17 family. Component of the Mediator complex.

Its subcellular location is the nucleus. Its function is as follows. Component of the Mediator complex, a coactivator involved in the regulated transcription of nearly all RNA polymerase II-dependent genes. Mediator functions as a bridge to convey information from gene-specific regulatory proteins to the basal RNA polymerase II transcription machinery. The Mediator complex, having a compact conformation in its free form, is recruited to promoters by direct interactions with regulatory proteins and serves for the assembly of a functional preinitiation complex with RNA polymerase II and the general transcription factors. The chain is Mediator of RNA polymerase II transcription subunit 17 (MED17) from Arabidopsis thaliana (Mouse-ear cress).